The chain runs to 102 residues: DNCESNADCHEGLECSNRKCLISFNSDETCSTGWDCVPGVWCRTHGSEPGKCDEDHRCPSDGVCTNPGTECDEDNICGYKEGEPCYGPCRKGLSCRQGTCLQ.

Post-translationally, contains 8 disulfide bonds. In terms of tissue distribution, expressed by the venom duct.

The protein localises to the secreted. In terms of biological role, acts as a neurotoxin by inhibiting an ion channel. The protein is Turripeptide OL55-like of Lophiotoma acuta (Marbled turris).